Consider the following 430-residue polypeptide: Adenylosuccinate synthetase (430 aa).

GTP contacts are provided by residues 12-18 (GDEGKGK) and 40-42 (GHT). Asp-13 functions as the Proton acceptor in the catalytic mechanism. The Mg(2+) site is built by Asp-13 and Gly-40. IMP-binding positions include 13–16 (DEGK), 38–41 (NAGH), Thr-130, Arg-144, Gln-224, Thr-239, and Arg-303. His-41 functions as the Proton donor in the catalytic mechanism. 299–305 (VNTGRKR) contributes to the substrate binding site. GTP-binding positions include Arg-305, 331–333 (KLD), and 413–415 (STS).

It belongs to the adenylosuccinate synthetase family. In terms of assembly, homodimer. Mg(2+) serves as cofactor.

It is found in the cytoplasm. The catalysed reaction is IMP + L-aspartate + GTP = N(6)-(1,2-dicarboxyethyl)-AMP + GDP + phosphate + 2 H(+). It functions in the pathway purine metabolism; AMP biosynthesis via de novo pathway; AMP from IMP: step 1/2. Plays an important role in the de novo pathway of purine nucleotide biosynthesis. Catalyzes the first committed step in the biosynthesis of AMP from IMP. This Nitrobacter winogradskyi (strain ATCC 25391 / DSM 10237 / CIP 104748 / NCIMB 11846 / Nb-255) protein is Adenylosuccinate synthetase.